Here is a 288-residue protein sequence, read N- to C-terminus: Alpha/beta hydrolase domain-containing protein 17B (288 aa).

Active-site charge relay system residues include Ser-170, Asp-235, and His-264.

It belongs to the AB hydrolase superfamily. ABHD17 family. Post-translationally, palmitoylated on cysteine residues located in a cysteine cluster at the N-terminus which promotes membrane localization.

The protein resides in the cell membrane. It localises to the recycling endosome membrane. It is found in the cell projection. The protein localises to the dendritic spine. Its subcellular location is the postsynaptic density membrane. It catalyses the reaction S-hexadecanoyl-L-cysteinyl-[protein] + H2O = L-cysteinyl-[protein] + hexadecanoate + H(+). Its function is as follows. Hydrolyzes fatty acids from S-acylated cysteine residues in proteins. Has depalmitoylating activity towards nras. The chain is Alpha/beta hydrolase domain-containing protein 17B from Xenopus laevis (African clawed frog).